The primary structure comprises 261 residues: Large ribosomal subunit protein uL10m (261 aa).

The N-terminal 28 residues, Met1–Tyr28, are a transit peptide targeting the mitochondrion. A disordered region spans residues Glu242–Ser261.

The protein belongs to the universal ribosomal protein uL10 family. As to quaternary structure, component of the mitochondrial large ribosomal subunit (mt-LSU). Mature mammalian 55S mitochondrial ribosomes consist of a small (28S) and a large (39S) subunit. The 28S small subunit contains a 12S ribosomal RNA (12S mt-rRNA) and 30 different proteins. The 39S large subunit contains a 16S rRNA (16S mt-rRNA), a copy of mitochondrial valine transfer RNA (mt-tRNA(Val)), which plays an integral structural role, and 52 different proteins. uL10m contributes a single cysteine residue to a zinc-binding site with mL66.

It is found in the mitochondrion. This chain is Large ribosomal subunit protein uL10m (MRPL10), found in Homo sapiens (Human).